Here is a 156-residue protein sequence, read N- to C-terminus: Small ribosomal subunit protein uS7 (156 aa).

This sequence belongs to the universal ribosomal protein uS7 family. In terms of assembly, part of the 30S ribosomal subunit. Contacts proteins S9 and S11.

In terms of biological role, one of the primary rRNA binding proteins, it binds directly to 16S rRNA where it nucleates assembly of the head domain of the 30S subunit. Is located at the subunit interface close to the decoding center, probably blocks exit of the E-site tRNA. The polypeptide is Small ribosomal subunit protein uS7 (Shewanella sp. (strain W3-18-1)).